A 156-amino-acid chain; its full sequence is MNLNATLIGQLIAFALFVAFCMKFVWPPLIKAIEERQANIANALASAEKAKQEQADSKAAADQEILKAKEEAQKIIDLATKRRNEILESVQAEAEIERQRIIEQGHAEVESERKRVQEELRQKVAALAVAGAEKIVGRSVDQAANNDIIDKLVAEL.

A helical membrane pass occupies residues 7–27 (LIGQLIAFALFVAFCMKFVWP).

It belongs to the ATPase B chain family. As to quaternary structure, F-type ATPases have 2 components, F(1) - the catalytic core - and F(0) - the membrane proton channel. F(1) has five subunits: alpha(3), beta(3), gamma(1), delta(1), epsilon(1). F(0) has three main subunits: a(1), b(2) and c(10-14). The alpha and beta chains form an alternating ring which encloses part of the gamma chain. F(1) is attached to F(0) by a central stalk formed by the gamma and epsilon chains, while a peripheral stalk is formed by the delta and b chains.

The protein resides in the cell inner membrane. Functionally, f(1)F(0) ATP synthase produces ATP from ADP in the presence of a proton or sodium gradient. F-type ATPases consist of two structural domains, F(1) containing the extramembraneous catalytic core and F(0) containing the membrane proton channel, linked together by a central stalk and a peripheral stalk. During catalysis, ATP synthesis in the catalytic domain of F(1) is coupled via a rotary mechanism of the central stalk subunits to proton translocation. Component of the F(0) channel, it forms part of the peripheral stalk, linking F(1) to F(0). This is ATP synthase subunit b from Actinobacillus pleuropneumoniae serotype 7 (strain AP76).